Consider the following 618-residue polypeptide: Arginine--tRNA ligase (618 aa).

The 'HIGH' region signature appears at 113–123 (ANPIHPLHIGH).

Belongs to the class-I aminoacyl-tRNA synthetase family.

The protein resides in the cytoplasm. It carries out the reaction tRNA(Arg) + L-arginine + ATP = L-arginyl-tRNA(Arg) + AMP + diphosphate. The chain is Arginine--tRNA ligase from Sulfolobus acidocaldarius (strain ATCC 33909 / DSM 639 / JCM 8929 / NBRC 15157 / NCIMB 11770).